Consider the following 1398-residue polypeptide: Pyrolysin (1398 aa).

The signal sequence occupies residues 1–26 (MNKKGLTVLFIAIMLLSVVPVHFVSA). Positions 27-149 (GTPPVSSENS…KTKEPSLEPK (123 aa)) are excised as a propeptide. Residue Asn-152 is glycosylated (N-linked (GlcNAc...) asparagine). The Peptidase S8 domain occupies 154-656 (TWVINALQFI…HGLVNVTKSW (503 aa)). Asp-179 (charge relay system) is an active-site residue. Asn-222, Asn-228, Asn-240, Asn-257, Asn-262, Asn-298, and Asn-327 each carry an N-linked (GlcNAc...) asparagine glycan. The active-site Charge relay system is His-365. N-linked (GlcNAc...) asparagine glycosylation occurs at Asn-406. Ser-590 functions as the Charge relay system in the catalytic mechanism. Asn-651, Asn-663, Asn-739, Asn-792, Asn-893, Asn-908, Asn-917, Asn-929, Asn-1048, Asn-1056, Asn-1084, Asn-1117, Asn-1133, Asn-1140, Asn-1148, Asn-1208, Asn-1233, Asn-1237, and Asn-1332 each carry an N-linked (GlcNAc...) asparagine glycan.

This sequence belongs to the peptidase S8 family. Post-translationally, LWM pyrolysin seems to be produced by autoproteolytic activation of HMW pyrolysin. Glycosylated.

It is found in the cell envelope. Has endopeptidase activity toward caseins, casein fragments including alpha-S1-casein and synthetic peptides. The protein is Pyrolysin (pls) of Pyrococcus furiosus (strain ATCC 43587 / DSM 3638 / JCM 8422 / Vc1).